The following is a 295-amino-acid chain: GTPase Era (295 aa).

Residues 3–170 (KSGFVTIVGR…VDLMKTELPE (168 aa)) form the Era-type G domain. The G1 stretch occupies residues 11–18 (GRPNVGKS). 11-18 (GRPNVGKS) is a GTP binding site. Residues 37 to 41 (QTTRN) form a G2 region. A G3 region spans residues 58–61 (DTPG). GTP contacts are provided by residues 58-62 (DTPGI) and 120-123 (NKID). Residues 120 to 123 (NKID) are G4. The interval 149-151 (IAA) is G5. The KH type-2 domain occupies 201-278 (LRDEVPHGIA…NVKIWVKVRK (78 aa)).

The protein belongs to the TRAFAC class TrmE-Era-EngA-EngB-Septin-like GTPase superfamily. Era GTPase family. As to quaternary structure, monomer.

Its subcellular location is the cytoplasm. The protein resides in the cell membrane. In terms of biological role, an essential GTPase that binds both GDP and GTP, with rapid nucleotide exchange. Plays a role in 16S rRNA processing and 30S ribosomal subunit biogenesis and possibly also in cell cycle regulation and energy metabolism. The chain is GTPase Era from Clostridium botulinum (strain Eklund 17B / Type B).